Reading from the N-terminus, the 274-residue chain is Beta-lysine N(6)-acetyltransferase (274 aa).

Residues 123–274 (FHLKIANETD…DMNFWYKLSE (152 aa)) form the N-acetyltransferase domain.

Belongs to the acetyltransferase family.

It catalyses the reaction (3S)-3,6-diaminohexanoate + acetyl-CoA = (3S)-6-acetamido-3-aminohexanoate + CoA + H(+). Functionally, catalyzes the acetylation of beta-lysine to N6-acetyl-beta-lysine, a compatible solute produced by methanogenic archaea that helps cells to cope with salt stress. This Methanococcus maripaludis (strain DSM 14266 / JCM 13030 / NBRC 101832 / S2 / LL) protein is Beta-lysine N(6)-acetyltransferase.